The sequence spans 92 residues: Small ribosomal subunit protein bS20 (92 aa).

The interval M1–S23 is disordered. The segment covering A7–H20 has biased composition (basic residues).

Belongs to the bacterial ribosomal protein bS20 family.

In terms of biological role, binds directly to 16S ribosomal RNA. The protein is Small ribosomal subunit protein bS20 of Pseudomonas fluorescens (strain ATCC BAA-477 / NRRL B-23932 / Pf-5).